The primary structure comprises 770 residues: ATP-dependent RNA helicase mak5 (770 aa).

The segment covering 1–10 (MGQKRQRDQK) has biased composition (basic and acidic residues). Disordered stretches follow at residues 1–33 (MGQK…ERES) and 78–174 (NGQL…AKDR). Positions 105-118 (TEFDDEWNGFSDED) are enriched in acidic residues. Basic and acidic residues-rich tracts occupy residues 138-154 (NGKK…IKAK) and 162-174 (EQKE…AKDR). The Q motif motif lies at 197-225 (SAWEPLGLSPETLTSLSKLKFSTPTSVQK). One can recognise a Helicase ATP-binding domain in the interval 228 to 437 (IPPILDGHDV…AGKGKWTGGD (210 aa)). 241-248 (ASTGSGKT) provides a ligand contact to ATP. Residues 363-366 (DEAD) carry the DEAD box motif. The interval 384–404 (LDRVEDGGPPDEEDDSSEENV) is disordered. Over residues 391-401 (GPPDEEDDSSE) the composition is skewed to acidic residues. The region spanning 489–639 (YLYTLLLYHP…KLPLESLELD (151 aa)) is the Helicase C-terminal domain. The interval 693–713 (KGWGRGRGRGRQERDRQVGST) is disordered.

This sequence belongs to the DEAD box helicase family. DDX24/MAK5 subfamily.

The protein resides in the nucleus. The protein localises to the nucleolus. It carries out the reaction ATP + H2O = ADP + phosphate + H(+). ATP-binding RNA helicase involved in the biogenesis of 60S ribosomal subunits and is required for the normal formation of 25S and 5.8S rRNAs. This Emericella nidulans (strain FGSC A4 / ATCC 38163 / CBS 112.46 / NRRL 194 / M139) (Aspergillus nidulans) protein is ATP-dependent RNA helicase mak5 (mak5).